The chain runs to 190 residues: Thymidylate kinase (190 aa).

Position 7–14 (7–14) interacts with ATP; sequence GVDTCGKS.

The protein belongs to the thymidylate kinase family.

The enzyme catalyses dTMP + ATP = dTDP + ADP. In terms of biological role, phosphorylation of dTMP to form dTDP in both de novo and salvage pathways of dTTP synthesis. The sequence is that of Thymidylate kinase from Wolinella succinogenes (strain ATCC 29543 / DSM 1740 / CCUG 13145 / JCM 31913 / LMG 7466 / NCTC 11488 / FDC 602W) (Vibrio succinogenes).